We begin with the raw amino-acid sequence, 136 residues long: Protein NrdI (136 aa).

It belongs to the NrdI family.

Functionally, probably involved in ribonucleotide reductase function. The protein is Protein NrdI of Salmonella arizonae (strain ATCC BAA-731 / CDC346-86 / RSK2980).